A 122-amino-acid polypeptide reads, in one-letter code: uncharacterized protein (122 aa).

The next 2 helical transmembrane spans lie at 14 to 34 (WLWI…FNNV) and 83 to 103 (IIGV…YFII).

Its subcellular location is the cell membrane. This is an uncharacterized protein from Ureaplasma parvum serovar 3 (strain ATCC 700970).